The following is a 118-amino-acid chain: Small ribosomal subunit protein uS19c (118 aa).

The segment at 92–118 (KKSSKKVTKNKKSIKKNIKTTSKKFKK) is disordered.

The protein belongs to the universal ribosomal protein uS19 family.

The protein resides in the plastid. Protein S19 forms a complex with S13 that binds strongly to the 16S ribosomal RNA. The polypeptide is Small ribosomal subunit protein uS19c (rps19) (Euglena longa (Euglenophycean alga)).